The primary structure comprises 220 residues: MAKQEYKQLPKRAEIHSATEQFKDTIKTSLGLDLFKGLGLTIKEFFSPSVTIHYPMEQLPLSPRYRAVHNLQRLLDSGSERCIGCGLCEKICTSNCIRIITHKGEDNRKKIDSYTINLGRCIYCGLCAEVCPELAIVMGNRFENASTQRSQYGSKSEFLTSEQDAKDCSHAEFLGFGFVSPNYNERMQATPLDYVQEPSKEESKKETPTSPEANKGDENV.

2 4Fe-4S ferredoxin-type domains span residues 71–102 (LQRL…IITH) and 112–141 (DSYT…MGNR). [4Fe-4S] cluster-binding residues include C82, C85, C88, C92, C121, C124, C127, and C131. The segment at 189–220 (ATPLDYVQEPSKEESKKETPTSPEANKGDENV) is disordered. Residues 198-207 (PSKEESKKET) are compositionally biased toward basic and acidic residues.

It belongs to the complex I 23 kDa subunit family. As to quaternary structure, NDH-1 is composed of 14 different subunits. Subunits NuoA, H, J, K, L, M, N constitute the membrane sector of the complex. [4Fe-4S] cluster serves as cofactor.

Its subcellular location is the cell inner membrane. The catalysed reaction is a quinone + NADH + 5 H(+)(in) = a quinol + NAD(+) + 4 H(+)(out). Functionally, NDH-1 shuttles electrons from NADH, via FMN and iron-sulfur (Fe-S) centers, to quinones in the respiratory chain. The immediate electron acceptor for the enzyme in this species is believed to be ubiquinone. Couples the redox reaction to proton translocation (for every two electrons transferred, four hydrogen ions are translocated across the cytoplasmic membrane), and thus conserves the redox energy in a proton gradient. This is NADH-quinone oxidoreductase subunit I from Helicobacter acinonychis (strain Sheeba).